Here is a 732-residue protein sequence, read N- to C-terminus: MLARRQRDPLQALRRRNQELKQQVDSLLSESQLKEALEPNKRQHIYQRCIQLKQAIDENKNALQKLSKADESAPVANYNQRKEEEHTLLDKLTQQLQGLAVTISRENITEVGAPTEEEEESESEDSEDSGGEEEDAEEEEEEKEENESHKWSTGEEYIAVGDFTAQQVGDLTFKKGEILLVIEKKPDGWWIAKDAKGNEGLVPRTYLEPYSEEEEGQESSEEGSEEDVEAVDETADGAEVKQRTDPHWSAVQKAISEAGIFCLVNHVSFCYLIVLMRNRMETVEDTNGSETGFRAWNVQSRGRIFLVSKPVLQINTVDVLTTMGAIPAGFRPSTLSQLLEEGNQFRANYFLQPELMPSQLAFRDLMWDATEGTIRSRPSRISLILTLWSCKMIPLPGMSIQVLSRHVRLCLFDGNKVLSNIHTVRATWQPKKPKTWTFSPQVTRILPCLLDGDCFIRSNSASPDLGILFELGISYIRNSTGERGELSCGWVFLKLFDASGVPIPAKTYELFLNGGTPYEKGIEVDPSISRRAHGSVFYQIMTMRRQPQLLVKLRSLNRRSRNVLSLLPETLIGNMCSIHLLIFYRQILGDVLLKDRMSLQSTDLISHPMLATFPMLLEQPDVMDALRSSWAGKESTLKRSEKRDKEFLKSTFLLVYHDCVLPLLHSTRLPPFRWAEEETETARWKVITDFLKQNQENQGALQALLSPDGVHEPFDLSEQTYDFLGEMRKNAV.

The stretch at 3-105 forms a coiled coil; sequence ARRQRDPLQA…LQGLAVTISR (103 aa). Tyrosine 46 bears the Phosphotyrosine; by FAK2 mark. Disordered regions lie at residues 103-153 and 205-244; these read ISRE…KWST and TYLE…KQRT. 2 stretches are compositionally biased toward acidic residues: residues 115–145 and 210–236; these read TEEE…EKEE and YSEE…ETAD. A phosphoserine; by CK2 mark is found at serine 121, serine 123, and serine 126. Residues 127-150 are a coiled coil; it reads EDSGGEEEDAEEEEEEKEENESHK. Positions 152–212 constitute an SH3 domain; it reads STGEEYIAVG…PRTYLEPYSE (61 aa). Residue tyrosine 349 is modified to Phosphotyrosine; by FAK2. Tyrosine 721 is subject to Phosphotyrosine; by SRC.

This sequence belongs to the nephrocystin-1 family. In terms of assembly, interacts with BCAR1, PTK2B/PYK2 and tensin. Interacts with INVS and NPHP3. Interacts with PACS1; the interaction is dependent on NPHP1 phosphorylation by CK2. Interacts with KIF7. Interacts with AHI1 and TNK2. Interacts with NPHP4 in a complex containing NPHP1, NPHP4 and RPGRIP1L. Interacts with IQCB1; the interaction likely requires additional interactors. Interacts with ANKS3. Interacts with SPATA7. Interacts with FLNA. Post-translationally, phosphorylation by CK2 is required for the interaction with PACS1 and the targeting to the base region of cilia. Widespread expression, with highest levels in pituitary gland, spinal cord, thyroid gland, testis, skeletal muscle, lymph node and trachea. Weakly expressed in heart, kidney and pancreas. Expressed in nasal epithelial cells (at protein level). Expressed in the renal collecting duct (at protein level).

It localises to the cell junction. The protein resides in the adherens junction. Its subcellular location is the cell projection. The protein localises to the cilium. It is found in the cytoplasm. It localises to the cytoskeleton. The protein resides in the cilium axoneme. Its subcellular location is the tight junction. Together with BCAR1 it may play a role in the control of epithelial cell polarity. Involved in the organization of apical junctions in kidney cells together with NPHP4 and RPGRIP1L/NPHP8. Does not seem to be strictly required for ciliogenesis. Seems to help to recruit PTK2B/PYK2 to cell matrix adhesions, thereby initiating phosphorylation of PTK2B/PYK2 and PTK2B/PYK2-dependent signaling. May play a role in the regulation of intraflagellar transport (IFT) during cilia assembly. Required for normal retina development. In connecting photoreceptor cilia influences the movement of some IFT proteins such as IFT88 and WDR19. Involved in spermatogenesis. This is Nephrocystin-1 (NPHP1) from Homo sapiens (Human).